A 164-amino-acid chain; its full sequence is MPDLRWKAYGVAALIFALDRFTKWLVETNVSVMDTYHVIPGFFDIVHSENRGVAFGILNDSTSEWRTTILVVLAGAAVIFIAAMLWNAQRLDRASFWGLSLILGGAAGNVFDRAMFGKVTDFLDLYYRDYHWHTFNVADSAIVVGSCLLLIDLLRPKRQAANVS.

The next 2 membrane-spanning stretches (helical) occupy residues 68–88 and 96–116; these read TILV…LWNA and FWGL…RAMF. Catalysis depends on residues Asp121 and Asp139. The chain crosses the membrane as a helical span at residues 134 to 154; the sequence is TFNVADSAIVVGSCLLLIDLL.

Belongs to the peptidase A8 family.

The protein resides in the cell inner membrane. It carries out the reaction Release of signal peptides from bacterial membrane prolipoproteins. Hydrolyzes -Xaa-Yaa-Zaa-|-(S,diacylglyceryl)Cys-, in which Xaa is hydrophobic (preferably Leu), and Yaa (Ala or Ser) and Zaa (Gly or Ala) have small, neutral side chains.. The protein operates within protein modification; lipoprotein biosynthesis (signal peptide cleavage). This protein specifically catalyzes the removal of signal peptides from prolipoproteins. The sequence is that of Lipoprotein signal peptidase from Solibacter usitatus (strain Ellin6076).